Reading from the N-terminus, the 93-residue chain is UPF0250 protein PSPA7_1111 (93 aa).

Belongs to the UPF0250 family.

In Pseudomonas paraeruginosa (strain DSM 24068 / PA7) (Pseudomonas aeruginosa (strain PA7)), this protein is UPF0250 protein PSPA7_1111.